The sequence spans 77 residues: U11-lycotoxin-Ls1b (77 aa).

The first 20 residues, 1–20 (MKLIIFTGLALFAIVSLIEA), serve as a signal peptide directing secretion. A propeptide spanning residues 21 to 26 (EEESGR) is cleaved from the precursor.

It belongs to the neurotoxin 19 (CSTX) family. 10 (U11-Lctx) subfamily. Post-translationally, contains 4 disulfide bonds. In terms of tissue distribution, expressed by the venom gland.

The protein localises to the secreted. In Lycosa singoriensis (Wolf spider), this protein is U11-lycotoxin-Ls1b.